We begin with the raw amino-acid sequence, 678 residues long: Glycine--tRNA ligase beta subunit (678 aa).

The protein belongs to the class-II aminoacyl-tRNA synthetase family. In terms of assembly, tetramer of two alpha and two beta subunits.

It localises to the cytoplasm. It catalyses the reaction tRNA(Gly) + glycine + ATP = glycyl-tRNA(Gly) + AMP + diphosphate. This is Glycine--tRNA ligase beta subunit from Streptococcus pneumoniae (strain ATCC BAA-255 / R6).